Reading from the N-terminus, the 435-residue chain is Eukaryotic peptide chain release factor subunit 1 (435 aa).

Belongs to the eukaryotic release factor 1 family. In terms of assembly, heterodimer of two subunits, one of which binds GTP.

The protein localises to the cytoplasm. Functionally, directs the termination of nascent peptide synthesis (translation) in response to the termination codons UAA, UAG and UGA. This Podospora anserina (Pleurage anserina) protein is Eukaryotic peptide chain release factor subunit 1 (SU2).